The primary structure comprises 122 residues: MIQQESRLKVADNSGAREILTIKVLGGSGRKFAGVGDMIVATVKQAIPGGNVKKGDVVKAVIVRTVSDVRRADGSYINFDENAAVIVKDDKSPVGTRIFGPVARELRDSDYMRIVSLAPEVL.

The protein belongs to the universal ribosomal protein uL14 family. As to quaternary structure, part of the 50S ribosomal subunit. Forms a cluster with proteins L3 and L19. In the 70S ribosome, L14 and L19 interact and together make contacts with the 16S rRNA in bridges B5 and B8.

Binds to 23S rRNA. Forms part of two intersubunit bridges in the 70S ribosome. This is Large ribosomal subunit protein uL14 from Leuconostoc citreum (strain KM20).